We begin with the raw amino-acid sequence, 691 residues long: Elongation factor G (691 aa).

Residues 8 to 283 enclose the tr-type G domain; it reads EDYRNFGIMA…AVVDYLPSPI (276 aa). Residues 17 to 24, 81 to 85, and 135 to 138 each bind GTP; these read AHIDAGKT, DTPGH, and NKMD.

The protein belongs to the TRAFAC class translation factor GTPase superfamily. Classic translation factor GTPase family. EF-G/EF-2 subfamily.

It localises to the cytoplasm. Catalyzes the GTP-dependent ribosomal translocation step during translation elongation. During this step, the ribosome changes from the pre-translocational (PRE) to the post-translocational (POST) state as the newly formed A-site-bound peptidyl-tRNA and P-site-bound deacylated tRNA move to the P and E sites, respectively. Catalyzes the coordinated movement of the two tRNA molecules, the mRNA and conformational changes in the ribosome. The sequence is that of Elongation factor G from Methylocella silvestris (strain DSM 15510 / CIP 108128 / LMG 27833 / NCIMB 13906 / BL2).